The chain runs to 291 residues: 33 kDa chaperonin (291 aa).

Cystine bridges form between Cys-237–Cys-239 and Cys-270–Cys-273.

This sequence belongs to the HSP33 family. In terms of processing, under oxidizing conditions two disulfide bonds are formed involving the reactive cysteines. Under reducing conditions zinc is bound to the reactive cysteines and the protein is inactive.

It is found in the cytoplasm. Functionally, redox regulated molecular chaperone. Protects both thermally unfolding and oxidatively damaged proteins from irreversible aggregation. Plays an important role in the bacterial defense system toward oxidative stress. This is 33 kDa chaperonin from Halalkalibacterium halodurans (strain ATCC BAA-125 / DSM 18197 / FERM 7344 / JCM 9153 / C-125) (Bacillus halodurans).